A 110-amino-acid polypeptide reads, in one-letter code: Ribonuclease P protein component 1 (110 aa).

Belongs to the eukaryotic/archaeal RNase P protein component 1 family. In terms of assembly, consists of a catalytic RNA component and at least 4-5 protein subunits.

The protein localises to the cytoplasm. It carries out the reaction Endonucleolytic cleavage of RNA, removing 5'-extranucleotides from tRNA precursor.. In terms of biological role, part of ribonuclease P, a protein complex that generates mature tRNA molecules by cleaving their 5'-ends. This is Ribonuclease P protein component 1 from Methanosarcina mazei (strain ATCC BAA-159 / DSM 3647 / Goe1 / Go1 / JCM 11833 / OCM 88) (Methanosarcina frisia).